A 507-amino-acid polypeptide reads, in one-letter code: Cytochrome P450 monooxygenase helB3 (507 aa).

A signal peptide spans 1–25 (MAVATLISILFAVLALRLCYLLIHA). N-linked (GlcNAc...) asparagine glycosylation is found at asparagine 111, asparagine 206, and asparagine 339. Position 435 (cysteine 435) interacts with heme.

The protein belongs to the cytochrome P450 family. The cofactor is heme.

It participates in mycotoxin biosynthesis. Its function is as follows. Cytochrome P450 monooxygenase; part of the gene cluster that mediates the biosynthesis of helvolic acid, an antibacterial nortriterpenoid. Protostadienol synthase helA cyclizes (3S)-oxidosqualene to (17Z)-protosta-17(20),24-dien-3-beta-ol (protostadienol). The synthesis of protostadienol is followed by several steps of monooxygenation, dehydrogenation, and acyl transfer to yield the final helvolic acid. Following the cyclization to the tetracyclic protostadienol by helA, cytochrome P450 monooxygenases helB1-mediated and helB2-mediated oxidation at C-4 and C-16, acyltransferase helD2-dependent acetylation of 16-OH, oxidation of C-21 by cytochrome P450 monooxygenase helB4, and short chain dehydrogenase helC-dependent oxidative decarboxylation yield the fusidane skeleton. This intermediate is further modified in three additional steps mediated by the cytochrome P450 monooxygenase helB3, the acyltransferase helD1, and the 3-ketosteroid 1-dehydrogenase helE to give helvolic acid. Compared with the late stages in the biosynthesis of helvolic acid, enzymes involved in the early stage modifications act in a relatively strict order. The hydroxylation of C-16 by helB1 and subsequent acetylation by helD2 should occur before the helB3-mediated oxidation of C-21. C-4 demethylation in fusidane-type antibiotics proceeds in an unusual manner though it is also achieved by oxidative decarboxylation. The methyl group at C-4 beta position is oxidized by helB1 and subsequently removed by the short chain dehydrogenase helC. The chain is Cytochrome P450 monooxygenase helB3 from Aspergillus fumigatus (strain ATCC MYA-4609 / CBS 101355 / FGSC A1100 / Af293) (Neosartorya fumigata).